We begin with the raw amino-acid sequence, 491 residues long: Protein nucleotidyltransferase YdiU (491 aa).

Positions 88, 90, 91, 111, 123, 124, 174, and 181 each coordinate ATP. The active-site Proton acceptor is the aspartate 250. Mg(2+) contacts are provided by asparagine 251 and aspartate 260. An ATP-binding site is contributed by aspartate 260. Positions 466–484 (DDQPDRADYAEPPQPEERV) are enriched in basic and acidic residues. Positions 466 to 491 (DDQPDRADYAEPPQPEERVLQTFCGT) are disordered.

The protein belongs to the SELO family. The cofactor is Mg(2+). It depends on Mn(2+) as a cofactor.

The enzyme catalyses L-seryl-[protein] + ATP = 3-O-(5'-adenylyl)-L-seryl-[protein] + diphosphate. The catalysed reaction is L-threonyl-[protein] + ATP = 3-O-(5'-adenylyl)-L-threonyl-[protein] + diphosphate. It catalyses the reaction L-tyrosyl-[protein] + ATP = O-(5'-adenylyl)-L-tyrosyl-[protein] + diphosphate. It carries out the reaction L-histidyl-[protein] + UTP = N(tele)-(5'-uridylyl)-L-histidyl-[protein] + diphosphate. The enzyme catalyses L-seryl-[protein] + UTP = O-(5'-uridylyl)-L-seryl-[protein] + diphosphate. The catalysed reaction is L-tyrosyl-[protein] + UTP = O-(5'-uridylyl)-L-tyrosyl-[protein] + diphosphate. Its function is as follows. Nucleotidyltransferase involved in the post-translational modification of proteins. It can catalyze the addition of adenosine monophosphate (AMP) or uridine monophosphate (UMP) to a protein, resulting in modifications known as AMPylation and UMPylation. This is Protein nucleotidyltransferase YdiU from Bradyrhizobium sp. (strain ORS 278).